We begin with the raw amino-acid sequence, 388 residues long: Probable nitrate transporter NarT (388 aa).

12 helical membrane passes run 14–34 (TLSL…MPMI), 45–65 (ISIV…PFGY), 69–89 (IIGA…PIFL), 98–118 (MLML…VGVT), 139–159 (GNLG…AIGW), 161–181 (STVR…FFLG), 206–226 (YYLS…GIFL), 242–262 (GIRA…GGII), 276–296 (FLFM…ILFT), 297–317 (VGCL…FKLV), 330–350 (GIVS…ITYV), and 359–379 (LAFI…WHLS).

Belongs to the major facilitator superfamily. Nitrate/nitrite porter (TC 2.A.1.8) family.

The protein localises to the cell membrane. Functionally, probably required for nitrate uptake under anoxic conditions. Also possibly involved in excretion of nitrite produced by the dissimilatory reduction of nitrate. This Staphylococcus carnosus (strain TM300) protein is Probable nitrate transporter NarT (narT).